The following is a 227-amino-acid chain: Ureidoacrylate amidohydrolase RutB (227 aa).

The active-site Proton acceptor is aspartate 22. Lysine 131 is an active-site residue. Cysteine 164 acts as the Nucleophile in catalysis.

This sequence belongs to the isochorismatase family. RutB subfamily.

It carries out the reaction (Z)-3-ureidoacrylate + H2O + H(+) = (Z)-3-aminoacrylate + NH4(+) + CO2. The enzyme catalyses (Z)-3-ureidoacrylate + H2O = (Z)-3-aminoacrylate + carbamate + H(+). The catalysed reaction is (Z)-2-methylureidoacrylate + H2O + H(+) = (Z)-2-methylaminoacrylate + NH4(+) + CO2. In terms of biological role, hydrolyzes ureidoacrylate to form aminoacrylate and carbamate. The carbamate hydrolyzes spontaneously, thereby releasing one of the nitrogen atoms of the pyrimidine ring as ammonia and one of its carbon atoms as CO2. In Azorhizobium caulinodans (strain ATCC 43989 / DSM 5975 / JCM 20966 / LMG 6465 / NBRC 14845 / NCIMB 13405 / ORS 571), this protein is Ureidoacrylate amidohydrolase RutB.